Here is a 194-residue protein sequence, read N- to C-terminus: Ribonuclease VapC1 (194 aa).

A PINc domain is found at 34-134 (YVIDTSAIIS…TDDYSIQNVA (101 aa)). Mg(2+) is bound by residues Asp-37 and Asp-150.

Belongs to the PINc/VapC protein family. The cofactor is Mg(2+).

Its function is as follows. Toxic component of a type II toxin-antitoxin (TA) system. An RNase. The polypeptide is Ribonuclease VapC1 (Thermoplasma acidophilum (strain ATCC 25905 / DSM 1728 / JCM 9062 / NBRC 15155 / AMRC-C165)).